A 183-amino-acid polypeptide reads, in one-letter code: Protein SHI RELATED SEQUENCE 6 (183 aa).

Positions 41, 44, 52, 57, 61, and 68 each coordinate Zn(2+). The segment at residues 41–68 (CRDCGNRAKKECLFERCRTCCKSRGYNC) is a DNA-binding region (zn(2)-C6 fungal-type; degenerate). Positions 79–88 (SSATRSSSSP) are enriched in low complexity. The interval 79 to 121 (SSATRSSSSPSERKKKLKIDKQSSPNVSLLPTTTSRQERGFRE) is disordered. A compositionally biased stretch (polar residues) spans 100–113 (QSSPNVSLLPTTTS). The Required for homo- and heterodimerization signature appears at 157–160 (ISGH).

The protein belongs to the SHI protein family.

It localises to the nucleus. Its function is as follows. Transcription activator that binds DNA on 5'-ACTCTAC-3' and promotes auxin homeostasis-regulating gene expression (e.g. YUC genes), as well as genes affecting stamen development, cell expansion and timing of flowering. Synergistically with other SHI-related proteins, regulates gynoecium, stamen and leaf development in a dose-dependent manner, controlling apical-basal patterning. Promotes style and stigma formation, and influences vascular development during gynoecium development. May also have a role in the formation and/or maintenance of the shoot apical meristem (SAM). The polypeptide is Protein SHI RELATED SEQUENCE 6 (SRS6) (Arabidopsis thaliana (Mouse-ear cress)).